Consider the following 92-residue polypeptide: MGRSLKKGPFADASLLKKVKEQEGSEKKTVIKTWSRRSTIFPSFIGYTFAVYDGRKHVPVYVQEDMVGHKLGEFVPTRTFHGHASDDKKTGK.

This sequence belongs to the universal ribosomal protein uS19 family.

In terms of biological role, protein S19 forms a complex with S13 that binds strongly to the 16S ribosomal RNA. The chain is Small ribosomal subunit protein uS19 from Limosilactobacillus reuteri (strain DSM 20016) (Lactobacillus reuteri).